The sequence spans 430 residues: Retinoic acid receptor RXR-alpha-A (430 aa).

Over residues 1–20 (MHPSLLSPTSLGPSGSLHSP) the composition is skewed to low complexity. 2 disordered regions span residues 1–25 (MHPS…STLS) and 48–73 (ASPG…SSSE). The modulating stretch occupies residues 1 to 99 (MHPSLLSPTS…QPSGTPLSLT (99 aa)). The span at 58–72 (ISPQLNSHMNSVSSS) shows a compositional bias: polar residues. Positions 100–175 (KHICAICGDR…MGMKREAVQE (76 aa)) form a DNA-binding region, nuclear receptor. Zn(2+)-binding residues include C103, C106, C120, and C123. The NR C4-type zinc-finger motif lies at 103-123 (CAICGDRSSGKHYGVYSCEGC). The tract at residues 128–133 (KRTVRK) is nuclear localization signal. Positions 139, 145, 155, and 158 each coordinate Zn(2+). An NR C4-type zinc finger spans residues 139-158 (CRDNKDCVIDKRQRNRCQYC). Over residues 174–186 (QEERQRAKERSEN) the composition is skewed to basic and acidic residues. Positions 174–196 (QEERQRAKERSENEVESTSSANE) are disordered. The tract at residues 176–192 (ERQRAKERSENEVESTS) is hinge. One can recognise an NR LBD domain in the interval 195–426 (NEDMPVEKIL…TFLMEMLEAP (232 aa)). R284 and A295 together coordinate 9-cis-retinoate. R284 and A295 together coordinate all-trans-retinoate. Residues 316–336 (RVLTELVSKMRDMQMDKTELG) form a required for nuclear export region. Residues 415-426 (IDTFLMEMLEAP) are AF-2.

Belongs to the nuclear hormone receptor family. NR2 subfamily. In terms of assembly, homodimer. Heterodimer; with a rar molecule. Binds DNA preferentially as a rar/rxr heterodimer.

The protein localises to the nucleus. Receptor for retinoic acid that acts as a transcription factor. Forms homo- or heterodimers with retinoic acid receptors (rars) and binds to target response elements in response to their ligands, all-trans or 9-cis retinoic acid, to regulate gene expression in various biological processes. The rar/rxr heterodimers bind to the retinoic acid response elements (RARE) composed of tandem 5'-AGGTCA-3' sites known as DR1-DR5 to regulate transcription. The high affinity ligand for rxrs is 9-cis retinoic acid. In the absence of ligand, the rar/rxr heterodimers associate with a multiprotein complex containing transcription corepressors that induce histone deacetylation, chromatin condensation and transcriptional suppression. On ligand binding, the corepressors dissociate from the receptors and coactivators are recruited leading to transcriptional activation. The protein is Retinoic acid receptor RXR-alpha-A of Danio rerio (Zebrafish).